A 490-amino-acid chain; its full sequence is Sushi domain-containing protein 4 (490 aa).

The segment at 1–20 (MYHGMNPSNGDGFLEQQLQQ) is disordered. The first 41 residues, 1 to 41 (MYHGMNPSNGDGFLEQQLQQQQPQSPQRLLAVILWFQLALC), serve as a signal peptide directing secretion. Topologically, residues 42–319 (FGPAQLTGGF…PSTHETLLTT (278 aa)) are extracellular. Sushi domains lie at 55–119 (NVCA…VCIQ), 120–179 (EDCR…ICQG), 178–239 (QGCL…RCLA), and 241–304 (EVCP…YCIK). 8 disulfide bridges follow: C57–C99, C85–C117, C122–C165, C147–C177, C180–C224, C210–C237, C243–C289, and C274–C302. N-linked (GlcNAc...) asparagine glycosylation is found at N104 and N134. N-linked (GlcNAc...) asparagine glycosylation is present at N192. The helical transmembrane segment at 320–340 (WKIVAFTATSVLLVLLLVILA) threads the bilayer. At 341-490 (RMFQTKFKAH…DEIPLMEEDP (150 aa)) the chain is on the cytoplasmic side. Residues 394–490 (YPASVGQGCP…DEIPLMEEDP (97 aa)) form a disordered region. Polar residues-rich tracts occupy residues 430–444 (CDST…QSLY) and 461–475 (DTIS…STSP). The segment covering 479-490 (IADEIPLMEEDP) has biased composition (acidic residues).

High expression in brain and eye, with weaker expression in spinal cord and testis. Detected in white matter of brain and in the outer segments of photoreceptors.

It localises to the membrane. Functionally, acts as a complement inhibitor by disrupting the formation of the classical C3 convertase. Isoform 3 inhibits the classical complement pathway, while membrane-bound isoform 1 inhibits deposition of C3b via both the classical and alternative complement pathways. In Mus musculus (Mouse), this protein is Sushi domain-containing protein 4 (Susd4).